Here is a 637-residue protein sequence, read N- to C-terminus: Interleukin-17 receptor E (637 aa).

The signal sequence occupies residues 1–23 (MGSPRLAALLLSLPLLLIGLAVS). Over 24-414 (ARVACPCLRS…VLCPDVSHRH (391 aa)) the chain is Extracellular. The segment at 87–134 (GSPSLSEESHRISIPSSAISHRGQRTKRAQPSAAEGREHLPEAGSQKC) is disordered. 2 N-linked (GlcNAc...) asparagine glycosylation sites follow: N278 and N307. A helical membrane pass occupies residues 415-435 (LGLLILALLALTALVGVVLVL). The Cytoplasmic segment spans residues 436–637 (LGRRLLPGSG…TNSPCGFSCL (202 aa)). The 137-residue stretch at 447–583 (TRPVLLLHAA…LLRDLPRLLR (137 aa)) folds into the SEFIR domain.

As to quaternary structure, forms heterodimers with IL17RA; the heterodimer binds IL17C. As to expression, predominantly expressed in mucosal tissues, including trachea, lung, kidney and stomach. Highly expressed in colon epithelial cells. Also expressed in testis. Low expression, if any, in heart, liver, spleen, or brain. Among CD4 T-helper cells, expressed at high levels in Th17 cells.

Its subcellular location is the cell membrane. The protein localises to the secreted. It is found in the cytoplasm. Specific functional receptor for IL17C, signaling through the NF-kappa-B and MAPK pathways. Requires TRAF3IP2 /ACT1 for signaling. Crucial regulator in innate immunity to bacterial pathogens, such as Citrobacter rodentium. Isoform 4 and isoform 5 may be either cytoplasmic inactive or dominant active forms. Isoform 2 and isoform 3 may act as soluble decoy receptors. In Mus musculus (Mouse), this protein is Interleukin-17 receptor E (Il17re).